The sequence spans 362 residues: Fructose-bisphosphate aldolase (362 aa).

Residue Ser63 participates in D-glyceraldehyde 3-phosphate binding. Asp112 acts as the Proton donor in catalysis. Residues His113, Asp147, Glu177, and His229 each coordinate Zn(2+). Residue Gly230 coordinates dihydroxyacetone phosphate. His268 lines the Zn(2+) pocket. Dihydroxyacetone phosphate-binding positions include 269-271 and 290-293; these read GGS and NVDT.

The protein belongs to the class II fructose-bisphosphate aldolase family. As to quaternary structure, homodimer. The cofactor is Zn(2+).

The enzyme catalyses beta-D-fructose 1,6-bisphosphate = D-glyceraldehyde 3-phosphate + dihydroxyacetone phosphate. Its pathway is carbohydrate degradation; glycolysis; D-glyceraldehyde 3-phosphate and glycerone phosphate from D-glucose: step 4/4. Catalyzes the aldol condensation of dihydroxyacetone phosphate (DHAP or glycerone-phosphate) with glyceraldehyde 3-phosphate (G3P) to form fructose 1,6-bisphosphate (FBP) in gluconeogenesis and the reverse reaction in glycolysis. The sequence is that of Fructose-bisphosphate aldolase (fba) from Neurospora crassa (strain ATCC 24698 / 74-OR23-1A / CBS 708.71 / DSM 1257 / FGSC 987).